The following is a 425-amino-acid chain: Glutamyl-tRNA reductase (425 aa).

Substrate-binding positions include 49–52, serine 109, 114–116, and glutamine 120; these read TCNR and EGQ. Residue cysteine 50 is the Nucleophile of the active site. Residue 189–194 coordinates NADP(+); it reads GAGETG.

The protein belongs to the glutamyl-tRNA reductase family. Homodimer.

It catalyses the reaction (S)-4-amino-5-oxopentanoate + tRNA(Glu) + NADP(+) = L-glutamyl-tRNA(Glu) + NADPH + H(+). The protein operates within porphyrin-containing compound metabolism; protoporphyrin-IX biosynthesis; 5-aminolevulinate from L-glutamyl-tRNA(Glu): step 1/2. It functions in the pathway porphyrin-containing compound metabolism; chlorophyll biosynthesis. Catalyzes the NADPH-dependent reduction of glutamyl-tRNA(Glu) to glutamate 1-semialdehyde (GSA). The polypeptide is Glutamyl-tRNA reductase (Chlorobium phaeovibrioides (strain DSM 265 / 1930) (Prosthecochloris vibrioformis (strain DSM 265))).